The primary structure comprises 474 residues: Gamma-aminobutyric acid receptor subunit beta-1 (474 aa).

The signal sequence occupies residues 1–25 (MWTVQNRESLGLLSFPVMITMVCCA). Residues 26–245 (HSTNEPSNMS…SFRLKRNIGY (220 aa)) lie on the Extracellular side of the membrane. An N-linked (GlcNAc...) asparagine glycan is attached at N105. Residue Y122 coordinates histamine. C161 and C175 are joined by a disulfide. N174 carries an N-linked (GlcNAc...) asparagine glycan. Histamine contacts are provided by residues 181 to 182 (SY) and T227. Y182 and T227 together coordinate 4-aminobutanoate. 3 consecutive transmembrane segments (helical) span residues 246–267 (FILQ…SFWI), 271–293 (ASAA…STHL), and 305–327 (AIDI…YAFV). Residues 328 to 451 (NYIFFGKGPQ…DLTDVNSIDK (124 aa)) lie on the Cytoplasmic side of the membrane. A helical transmembrane segment spans residues 452 to 473 (WSRMFFPITFSLFNVVYWLYYV).

The protein belongs to the ligand-gated ion channel (TC 1.A.9) family. Gamma-aminobutyric acid receptor (TC 1.A.9.5) subfamily. GABRB1 sub-subfamily. Heteropentamer, formed by a combination of alpha (GABRA1-6), beta (GABRB1-3), gamma (GABRG1-3), delta (GABRD), epsilon (GABRE), rho (GABRR1-3), pi (GABRP) and theta (GABRQ) chains, each subunit exhibiting distinct physiological and pharmacological properties. Binds UBQLN1.

It localises to the postsynaptic cell membrane. The protein resides in the cell membrane. The catalysed reaction is chloride(in) = chloride(out). Its activity is regulated as follows. Potentiated by etomidate, propofol, pregnanolone and flurazepam. Potentiated by histamine. Its function is as follows. Beta subunit of the heteropentameric ligand-gated chloride channel gated by gamma-aminobutyric acid (GABA), a major inhibitory neurotransmitter in the brain. GABA-gated chloride channels, also named GABA(A) receptors (GABAAR), consist of five subunits arranged around a central pore and contain one or two GABA active binding sites located at the alpha and beta subunit interfaces, depending on subunit composition. When activated by GABA, GABAARs selectively allow the flow of chloride anions across the cell membrane down their electrochemical gradient. Chloride influx into the postsynaptic neuron following GABAAR opening decreases the neuron ability to generate a new action potential, thereby reducing nerve transmission. Beta-containing GABAARs can simultaneously bind GABA and histamine where histamine binds at the interface of two neighboring beta subunits, which may be involved in the regulation of sleep and wakefulness. The chain is Gamma-aminobutyric acid receptor subunit beta-1 from Homo sapiens (Human).